The sequence spans 54 residues: Small polypeptide DEVIL 12 (54 aa).

The required for DVL/RTFL small polypeptide activity stretch occupies residues 20–51 (NNKLTPNRSLKETRSRLYIIRRCLVMLLCWRE). An N-linked (GlcNAc...) asparagine glycan is attached at asparagine 26. Residues 31 to 48 (ETRSRLYIIRRCLVMLLC) traverse the membrane as a helical segment.

Belongs to the DVL/RTFL small polypeptides family.

Its subcellular location is the cell membrane. Its function is as follows. Small polypeptide acting as a regulatory molecule which coordinates cellular responses required for differentiation, growth and development, probably by restricting polar cell proliferation in lateral organs and coordinating socket cell recruitment and differentiation at trichome sites. The sequence is that of Small polypeptide DEVIL 12 from Arabidopsis thaliana (Mouse-ear cress).